The primary structure comprises 331 residues: Ketol-acid reductoisomerase (NADP(+)) (331 aa).

In terms of domain architecture, KARI N-terminal Rossmann spans 2–182 (AKLFYDSDAD…GGTRAGILET (181 aa)). NADP(+) contacts are provided by residues 25–28 (YGSQ), Ser51, Ser53, and 83–86 (DEFQ). The active site involves His108. Gly134 provides a ligand contact to NADP(+). The 146-residue stretch at 183 to 328 (NFKEETETDL…KTLRSMFSWL (146 aa)) folds into the KARI C-terminal knotted domain. Residues Asp191, Glu195, Glu227, and Glu231 each contribute to the Mg(2+) site. Position 252 (Ser252) interacts with substrate.

It belongs to the ketol-acid reductoisomerase family. It depends on Mg(2+) as a cofactor.

The catalysed reaction is (2R)-2,3-dihydroxy-3-methylbutanoate + NADP(+) = (2S)-2-acetolactate + NADPH + H(+). It carries out the reaction (2R,3R)-2,3-dihydroxy-3-methylpentanoate + NADP(+) = (S)-2-ethyl-2-hydroxy-3-oxobutanoate + NADPH + H(+). It functions in the pathway amino-acid biosynthesis; L-isoleucine biosynthesis; L-isoleucine from 2-oxobutanoate: step 2/4. It participates in amino-acid biosynthesis; L-valine biosynthesis; L-valine from pyruvate: step 2/4. Its function is as follows. Involved in the biosynthesis of branched-chain amino acids (BCAA). Catalyzes an alkyl-migration followed by a ketol-acid reduction of (S)-2-acetolactate (S2AL) to yield (R)-2,3-dihydroxy-isovalerate. In the isomerase reaction, S2AL is rearranged via a Mg-dependent methyl migration to produce 3-hydroxy-3-methyl-2-ketobutyrate (HMKB). In the reductase reaction, this 2-ketoacid undergoes a metal-dependent reduction by NADPH to yield (R)-2,3-dihydroxy-isovalerate. In Prochlorococcus marinus (strain NATL1A), this protein is Ketol-acid reductoisomerase (NADP(+)).